Reading from the N-terminus, the 170-residue chain is Calcineurin subunit B type 1 (170 aa).

EF-hand domains are found at residues 18-46, 50-85, 87-122, and 128-163; these read DEIRRLGKRFRKLDLDNSGALSIDEFMSL, QQNPLVQRVIDIFDADGNGEVDFKEFIQGVSQFSVR, DKLSKLRFAFRIYDMDNDGYISNGELFQVLKMMVGN, and QLQQIVDKTICFADKDEDGKISFDEFCSVVGNTDIH. Residues Asp31, Asp33, Ser35, Glu42, Asp63, Asp65, Asn67, Glu69, Glu74, Asp100, Asp102, Asp104, Tyr106, Glu111, Asp141, Asp143, Asp145, Lys147, and Glu152 each contribute to the Ca(2+) site.

This sequence belongs to the calcineurin regulatory subunit family. Composed of two components (A and B), the A component is the catalytic subunit and the B component confers calcium sensitivity.

Calcineurin is a calcium-binding and calmodulin-binding protein found in all cells from yeast to mammals, and a calcium-dependent, calmodulin-stimulated protein phosphatase. The protein is Calcineurin subunit B type 1 (CanB) of Drosophila melanogaster (Fruit fly).